Consider the following 66-residue polypeptide: UPF0370 protein CKO_00315 (66 aa).

A helical membrane pass occupies residues 4-24 (LAKYWWILVLVFLVGVLINVI). Positions 39-66 (KPELPPHRDFNDKWDDDDDWPKKDQPKK) are disordered. Basic and acidic residues predominate over residues 42-51 (LPPHRDFNDK).

Belongs to the UPF0370 family.

The protein localises to the cell membrane. In Citrobacter koseri (strain ATCC BAA-895 / CDC 4225-83 / SGSC4696), this protein is UPF0370 protein CKO_00315.